A 346-amino-acid chain; its full sequence is S-adenosylmethionine:tRNA ribosyltransferase-isomerase (346 aa).

This sequence belongs to the QueA family. Monomer.

Its subcellular location is the cytoplasm. The enzyme catalyses 7-aminomethyl-7-carbaguanosine(34) in tRNA + S-adenosyl-L-methionine = epoxyqueuosine(34) in tRNA + adenine + L-methionine + 2 H(+). It functions in the pathway tRNA modification; tRNA-queuosine biosynthesis. Its function is as follows. Transfers and isomerizes the ribose moiety from AdoMet to the 7-aminomethyl group of 7-deazaguanine (preQ1-tRNA) to give epoxyqueuosine (oQ-tRNA). The sequence is that of S-adenosylmethionine:tRNA ribosyltransferase-isomerase from Neisseria meningitidis serogroup C (strain 053442).